We begin with the raw amino-acid sequence, 625 residues long: Adenine deaminase 2 (625 aa).

Belongs to the metallo-dependent hydrolases superfamily. Adenine deaminase family. The cofactor is Mn(2+).

It carries out the reaction adenine + H2O + H(+) = hypoxanthine + NH4(+). The polypeptide is Adenine deaminase 2 (Bradyrhizobium diazoefficiens (strain JCM 10833 / BCRC 13528 / IAM 13628 / NBRC 14792 / USDA 110)).